The following is a 640-amino-acid chain: G protein-coupled receptor kinase 1 (640 aa).

Residues 1 to 201 form an N-terminal region; it reads MEIENIVANT…LEKRPVDKHT (201 aa). In terms of domain architecture, RGS spans 52–187; sequence YAFVVEKQPI…IQTMYFHRFL (136 aa). Positions 202 to 469 constitute a Protein kinase domain; the sequence is FRLYRVLGKG…AEEIRAHPFF (268 aa). ATP-binding positions include 208–216 and Lys-231; that span reads LGKGGFGEV. Catalysis depends on Asp-327, which acts as the Proton acceptor. Positions 479 to 544 constitute an AGC-kinase C-terminal domain; sequence EPVPWKKMEA…GCVSIPWQSE (66 aa). The interval 610–640 is disordered; it reads GVDQQQPSTSAKPAAVRSSRAASASGRTSMI. Residues 619 to 640 show a composition bias toward low complexity; the sequence is SAKPAAVRSSRAASASGRTSMI.

Belongs to the protein kinase superfamily. AGC Ser/Thr protein kinase family. GPRK subfamily.

It carries out the reaction [G-protein-coupled receptor] + ATP = [G-protein-coupled receptor]-phosphate + ADP + H(+). In terms of biological role, specifically phosphorylates the activated forms of G protein-coupled receptors. The protein is G protein-coupled receptor kinase 1 (grk-1) of Caenorhabditis briggsae.